Consider the following 1275-residue polypeptide: MWQKWADVTQGHVAAPGPGDFAQMVAVLRKVLEERQPCAPEQCDERSALEGALRLATEHLHRALPDGGQGMSSLQEAARLADPAAFSIPASHRARGGTLVTSAKRAFVNGLEPFHVEMLRPQGNFNRALVRVLEYLTVHRALGLRDDVSSWAVAQLEPLAVPTRWVVGSHRGRVAGALVGFAKRGYLYTLGPVLEAVLQGQARWNLAMVEAIRAAAGAQAPGEAEARRHVADVEALREPLAGRTLPGALRVTQPLWGEVLRRQSRFNAESVLALANLLGTRTAPPQPPSLADYPAWCAAREPARVTAAQEAVARLSRRPLISLVTPVHDASEAFLRECLASVSSQVYADWEWLLVDDASTAPHLARILREAAERESRIRVLTASSEGDTARATNEGFAACRGDFVGFLGAEDTLSPHALAEVALAFLAQPELALLYTDEDGLDAQGHRSAPFFKPDWSPDLLRSVDYVRHFLVVRRETLAQVGGLREGFDGAQGHDLMLRLSEATSSIGHITEPLYHAREGSAASASRGAGLDTATKAGVRALSEHLARQGESAEVTSPAPIQYRVRYPVRGTPKVSIIVPFKDRPDLLRTLVDSLLAQTRYPHFEVLLVSNNSTRPETFALLEQWVDPRLVKLTWDHPFNYPAINNWAAKQASGELLLFLNNDMEVVDPSWLDELVSQAQRPEVGAVGCKLLFPEGTVQHAGVVVGMTGFAGHPFWRLPEGPISTPFGHTEWTRNWLSVTSACVILRREVFESLGGFDERFQVCGSDVELGLRLNAQGLRVVCTAQTRLIHHESASRRADAIPEADYWLSYAAYRPWLGPKGDPYYNPHLTLTATDCGLRRHPEDGEQLAVRTLGRDVPSARDVRGEQRARAQRHLIEHLEAWDFTPEQAQTSRESAPAALAALRAKGRVETATWFVPAFGHVYAGIHTIFRFADLMQRRHGVRSDFVIYDQPNVRPGDIEARVAAICPGAVGAVRVLRRPEDVALLPACDLALATAWTSAYRVLHHPRAGLRGYFVQDYEPLFHAAGTPSALAEQTYGLGFYGIFNTPGLYEHVVGLHGMEGAWFEPAVDGTLFHPRRPPRQGPVRVFFYGRPGNERNGFELGLAALAQLKRELGPAVEVLAAGAEWDPEAYGVRGLVTNLGMLPAERTGALYRECDVGLCFMFTRHPSYLPLEMMACGVTVVTNDNPTNRWLLTHGENCLLAEPTPSGVLARLRDAVSNGALRARLGTNAAERVSRTSWEAEVDRVMKGLLNTGAHPAATLDDRASSLEHAS.

Involved in O-antigen biosynthesis. In Myxococcus xanthus, this protein is O-antigen biosynthesis protein RfbC (rfbC).